A 248-amino-acid chain; its full sequence is Type II methyltransferase M.AquIA (248 aa).

The SAM-dependent MTase C5-type domain occupies 3–248; the sequence is KKLISLFSGA…IKDRIKNHGY (246 aa). Residue C82 is part of the active site.

This sequence belongs to the class I-like SAM-binding methyltransferase superfamily. C5-methyltransferase family. In terms of assembly, heterodimer of an alpha and a beta subunit.

It carries out the reaction a 2'-deoxycytidine in DNA + S-adenosyl-L-methionine = a 5-methyl-2'-deoxycytidine in DNA + S-adenosyl-L-homocysteine + H(+). Its function is as follows. A methylase, recognizes the double-stranded sequence 5'-CYCGRG-3', methylates C-1 on both strands, and protects the DNA from cleavage by the AquI endonuclease. The protein is Type II methyltransferase M.AquIA (aquIMA) of Picosynechococcus sp. (strain ATCC 27264 / PCC 7002 / PR-6) (Agmenellum quadruplicatum).